A 96-amino-acid chain; its full sequence is Protein Vpr (96 aa).

The interval 1-42 (MEQAPEDQGPQREPYNEWTLELLEELKSEAVRHFPRLWLHSL) is homooligomerization. A phosphoserine; by host mark is found at serine 79, serine 94, and serine 96.

The protein belongs to the HIV-1 VPR protein family. In terms of assembly, homooligomer, may form homodimer. Interacts with p6-gag region of the Pr55 Gag precursor protein through a (Leu-X-X)4 motif near the C-terminus of the P6gag protein. Interacts with host UNG. May interact with host RAD23A/HHR23A. Interacts with host VPRBP/DCAF1, leading to hijack the CUL4A-RBX1-DDB1-DCAF1/VPRBP complex, mediating ubiquitination of host proteins such as TERT and ZGPAT and arrest of the cell cycle in G2 phase. Phosphorylated on several residues by host. These phosphorylations regulate VPR activity for the nuclear import of the HIV-1 pre-integration complex.

The protein localises to the virion. The protein resides in the host nucleus. It localises to the host extracellular space. During virus replication, may deplete host UNG protein, and incude G2-M cell cycle arrest. Acts by targeting specific host proteins for degradation by the 26S proteasome, through association with the cellular CUL4A-DDB1 E3 ligase complex by direct interaction with host VPRPB/DCAF-1. Cell cycle arrest reportedly occurs within hours of infection and is not blocked by antiviral agents, suggesting that it is initiated by the VPR carried into the virion. Additionally, VPR induces apoptosis in a cell cycle dependent manner suggesting that these two effects are mechanistically linked. Detected in the serum and cerebrospinal fluid of AIDS patient, VPR may also induce cell death to bystander cells. In terms of biological role, during virus entry, plays a role in the transport of the viral pre-integration (PIC) complex to the host nucleus. This function is crucial for viral infection of non-dividing macrophages. May act directly at the nuclear pore complex, by binding nucleoporins phenylalanine-glycine (FG)-repeat regions. The polypeptide is Protein Vpr (Human immunodeficiency virus type 1 group M subtype B (isolate RF/HAT3) (HIV-1)).